The sequence spans 317 residues: Flavin-dependent thymidylate synthase (317 aa).

Residue serine 46 coordinates FAD. Positions 55 to 166 (FEWKKEKWIE…ELETDMDFYT (112 aa)) are insert. Residues 100-317 (AVKERIKEAF…YRGTDKKNVI (218 aa)) enclose the ThyX domain. DUMP is bound by residues 178–181 (QWMR), 189–193 (EVSKR), and arginine 259. FAD-binding positions include 181–183 (RHR) and glutamate 189. Positions 181-191 (RHRFGSYNEVS) match the ThyX motif motif. Asparagine 281 is a binding site for FAD. Arginine 286 lines the dUMP pocket. Arginine 286 functions as the Involved in ionization of N3 of dUMP, leading to its activation in the catalytic mechanism.

It belongs to the thymidylate synthase ThyX family. In terms of assembly, homotetramer. The cofactor is FAD.

It carries out the reaction dUMP + (6R)-5,10-methylene-5,6,7,8-tetrahydrofolate + NADPH + H(+) = dTMP + (6S)-5,6,7,8-tetrahydrofolate + NADP(+). It participates in pyrimidine metabolism; dTTP biosynthesis. Functionally, catalyzes the reductive methylation of 2'-deoxyuridine-5'-monophosphate (dUMP) to 2'-deoxythymidine-5'-monophosphate (dTMP) while utilizing 5,10-methylenetetrahydrofolate (mTHF) as the methyl donor, and NADPH and FADH(2) as the reductant. This is Flavin-dependent thymidylate synthase from Aquifex aeolicus (strain VF5).